Consider the following 153-residue polypeptide: MMTLTTDKKTMNITEIQSLLPHRYPFLLIDRVTDYEEGKYLIGLKNVSVNEPQFTGHFPQLPVFPGVLILEAMAQATGLLAFKTFGAPKENELYYFASIDEAKFRKPVTPGDQLMVEVEFLKERRGIALFNGVAKVDGDVVCSAQLKCARREF.

The active site involves H57.

The protein belongs to the thioester dehydratase family. FabZ subfamily.

It is found in the cytoplasm. The catalysed reaction is a (3R)-hydroxyacyl-[ACP] = a (2E)-enoyl-[ACP] + H2O. In terms of biological role, involved in unsaturated fatty acids biosynthesis. Catalyzes the dehydration of short chain beta-hydroxyacyl-ACPs and long chain saturated and unsaturated beta-hydroxyacyl-ACPs. This is 3-hydroxyacyl-[acyl-carrier-protein] dehydratase FabZ from Vibrio cholerae serotype O1 (strain ATCC 39315 / El Tor Inaba N16961).